Consider the following 243-residue polypeptide: Isoprenyl transferase 2 (243 aa).

D23 is an active-site residue. A Mg(2+)-binding site is contributed by D23. Residues 24–27, W28, R36, H40, and 68–70 contribute to the substrate site; these read GNGR and STE. N71 acts as the Proton acceptor in catalysis. Substrate-binding positions include W72, R74, R191, and 197-199; that span reads RTS. E210 provides a ligand contact to Mg(2+).

Belongs to the UPP synthase family. Homodimer. Requires Mg(2+) as cofactor.

Functionally, catalyzes the condensation of isopentenyl diphosphate (IPP) with allylic pyrophosphates generating different type of terpenoids. This Corynebacterium glutamicum (strain ATCC 13032 / DSM 20300 / JCM 1318 / BCRC 11384 / CCUG 27702 / LMG 3730 / NBRC 12168 / NCIMB 10025 / NRRL B-2784 / 534) protein is Isoprenyl transferase 2.